The following is a 103-amino-acid chain: uncharacterized protein (103 aa).

The N-terminal stretch at methionine 1–alanine 13 is a signal peptide. An N-linked (GlcNAc...) asparagine glycan is attached at asparagine 67. The segment at leucine 73–phenylalanine 103 is disordered.

It localises to the secreted. This is an uncharacterized protein from Dictyostelium discoideum (Social amoeba).